The following is a 1414-amino-acid chain: DNA-directed RNA polymerase subunit beta' (1414 aa).

Zn(2+)-binding residues include cysteine 70, cysteine 72, cysteine 85, and cysteine 88. Mg(2+) is bound by residues aspartate 460, aspartate 462, and aspartate 464. Zn(2+) contacts are provided by cysteine 815, cysteine 889, cysteine 896, and cysteine 899. The interval 1395–1414 (EAEAQFADVSSTPDSDTDAS) is disordered.

The protein belongs to the RNA polymerase beta' chain family. In terms of assembly, the RNAP catalytic core consists of 2 alpha, 1 beta, 1 beta' and 1 omega subunit. When a sigma factor is associated with the core the holoenzyme is formed, which can initiate transcription. Mg(2+) serves as cofactor. Zn(2+) is required as a cofactor.

It catalyses the reaction RNA(n) + a ribonucleoside 5'-triphosphate = RNA(n+1) + diphosphate. DNA-dependent RNA polymerase catalyzes the transcription of DNA into RNA using the four ribonucleoside triphosphates as substrates. The polypeptide is DNA-directed RNA polymerase subunit beta' (Janthinobacterium sp. (strain Marseille) (Minibacterium massiliensis)).